The sequence spans 219 residues: 2-hydroxy-3-keto-5-methylthiopentenyl-1-phosphate phosphatase (219 aa).

The protein belongs to the HAD-like hydrolase superfamily. MtnX family.

The enzyme catalyses 2-hydroxy-5-methylsulfanyl-3-oxopent-1-enyl phosphate + H2O = 1,2-dihydroxy-5-(methylsulfanyl)pent-1-en-3-one + phosphate. The protein operates within amino-acid biosynthesis; L-methionine biosynthesis via salvage pathway; L-methionine from S-methyl-5-thio-alpha-D-ribose 1-phosphate: step 4/6. Functionally, dephosphorylates 2-hydroxy-3-keto-5-methylthiopentenyl-1-phosphate (HK-MTPenyl-1-P) yielding 1,2-dihydroxy-3-keto-5-methylthiopentene (DHK-MTPene). The chain is 2-hydroxy-3-keto-5-methylthiopentenyl-1-phosphate phosphatase from Bacillus cereus (strain G9842).